Consider the following 642-residue polypeptide: MPIITLPDGSKREFVNPVSTLDVAADIGPGLAKACIAGRVNGELKDACDLISTDSDLSIITAKDQEGVEILRHSCAHLLGHAVKQMWPEAKMAIGPVIDNGFYYDIDLDHKLTAEDIEALEKRMMDLAKTNYDVVKRVVSWHEARDAFSERGEVYKIAILDENISKDATPALYHHEEYTDMCRGPHVPNMRFCQNFKLMSVAGAYWRGNSDNKMLQRVYGTAWADKKALKTHLTRLEEAAKRDHRKIGKQLDLYHMQEEAPGMVFWHNDGWSLFLELEKFIRQKLGQYTYQEVKGPLMMDRALWERSGHWDKYSDAMFTTNSENREYAIKPMNCPGHVQIFNQGLKSYRDLPLRMAEFGCCHRNEPSGSLHGLMRVRGFTQDDAHIFCTDDQVQKEVSDCIQMVYDTYATFGFENIVVKLSTRPEKRIGDDDMWDRAEEALKQALIANEIEFEILPGEGAFYGPKIEFTLHDCLDRAWQCGTVQLDYALPSRLGATYVAEDNTRQTPVMIHRAILGSLERFLGILIEEYAGKFPTWLAPMQVVVMNITDKQADYVQDVVKIFKEQGIRASFDLRNEKIGFKIREHTLRRVPYLLVVGDQEMENKEVAVRTRDGIDLGKMSIEDFAKKIHKDISSRSLKLLEE.

The TGS domain maps to 1-61; the sequence is MPIITLPDGS…STDSDLSIIT (61 aa). Residues 243–534 form a catalytic region; sequence DHRKIGKQLD…LIEEYAGKFP (292 aa). Zn(2+)-binding residues include C334, H385, and H511.

Belongs to the class-II aminoacyl-tRNA synthetase family. Homodimer. It depends on Zn(2+) as a cofactor.

It is found in the cytoplasm. It catalyses the reaction tRNA(Thr) + L-threonine + ATP = L-threonyl-tRNA(Thr) + AMP + diphosphate + H(+). Functionally, catalyzes the attachment of threonine to tRNA(Thr) in a two-step reaction: L-threonine is first activated by ATP to form Thr-AMP and then transferred to the acceptor end of tRNA(Thr). Also edits incorrectly charged L-seryl-tRNA(Thr). In Shewanella denitrificans (strain OS217 / ATCC BAA-1090 / DSM 15013), this protein is Threonine--tRNA ligase.